Reading from the N-terminus, the 88-residue chain is Small ribosomal subunit protein uS17 (88 aa).

Belongs to the universal ribosomal protein uS17 family. As to quaternary structure, part of the 30S ribosomal subunit.

Its function is as follows. One of the primary rRNA binding proteins, it binds specifically to the 5'-end of 16S ribosomal RNA. This is Small ribosomal subunit protein uS17 from Synechococcus sp. (strain WH7803).